The sequence spans 557 residues: Dihydroxy-acid dehydratase (557 aa).

Cys-49 serves as a coordination point for [2Fe-2S] cluster. Asp-81 contributes to the Mg(2+) binding site. Residue Cys-122 participates in [2Fe-2S] cluster binding. Residues Asp-123 and Lys-124 each contribute to the Mg(2+) site. N6-carboxylysine is present on Lys-124. Cys-194 is a [2Fe-2S] cluster binding site. Glu-446 is a binding site for Mg(2+). Ser-472 acts as the Proton acceptor in catalysis.

Belongs to the IlvD/Edd family. In terms of assembly, homodimer. [2Fe-2S] cluster is required as a cofactor. It depends on Mg(2+) as a cofactor.

The enzyme catalyses (2R)-2,3-dihydroxy-3-methylbutanoate = 3-methyl-2-oxobutanoate + H2O. The catalysed reaction is (2R,3R)-2,3-dihydroxy-3-methylpentanoate = (S)-3-methyl-2-oxopentanoate + H2O. It participates in amino-acid biosynthesis; L-isoleucine biosynthesis; L-isoleucine from 2-oxobutanoate: step 3/4. Its pathway is amino-acid biosynthesis; L-valine biosynthesis; L-valine from pyruvate: step 3/4. Its function is as follows. Functions in the biosynthesis of branched-chain amino acids. Catalyzes the dehydration of (2R,3R)-2,3-dihydroxy-3-methylpentanoate (2,3-dihydroxy-3-methylvalerate) into 2-oxo-3-methylpentanoate (2-oxo-3-methylvalerate) and of (2R)-2,3-dihydroxy-3-methylbutanoate (2,3-dihydroxyisovalerate) into 2-oxo-3-methylbutanoate (2-oxoisovalerate), the penultimate precursor to L-isoleucine and L-valine, respectively. This is Dihydroxy-acid dehydratase from Prochlorococcus marinus (strain AS9601).